A 356-amino-acid chain; its full sequence is 3-isopropylmalate dehydrogenase (356 aa).

Substrate-binding residues include Arg-95, Arg-105, Arg-133, and Asp-223. Residues Asp-223, Asp-247, and Asp-251 each contribute to the Mg(2+) site. Gly-281–Asn-293 contributes to the NAD(+) binding site.

The protein belongs to the isocitrate and isopropylmalate dehydrogenases family. LeuB type 1 subfamily. Homodimer. Mg(2+) serves as cofactor. Mn(2+) is required as a cofactor.

The protein resides in the cytoplasm. It catalyses the reaction (2R,3S)-3-isopropylmalate + NAD(+) = 4-methyl-2-oxopentanoate + CO2 + NADH. The protein operates within amino-acid biosynthesis; L-leucine biosynthesis; L-leucine from 3-methyl-2-oxobutanoate: step 3/4. Catalyzes the oxidation of 3-carboxy-2-hydroxy-4-methylpentanoate (3-isopropylmalate) to 3-carboxy-4-methyl-2-oxopentanoate. The product decarboxylates to 4-methyl-2 oxopentanoate. The chain is 3-isopropylmalate dehydrogenase from Neisseria meningitidis serogroup B (strain ATCC BAA-335 / MC58).